An 89-amino-acid polypeptide reads, in one-letter code: Bombyxin A-2 (89 aa).

The first 19 residues, Met-1 to Thr-19, serve as a signal peptide directing secretion. The residue at position 20 (Gln-20) is a Pyrrolidone carboxylic acid. Disulfide bonds link Cys-29/Cys-76, Cys-41/Cys-89, and Cys-75/Cys-80. Residues Ser-50–Gly-68 constitute a propeptide, c peptide like.

Belongs to the insulin family. As to quaternary structure, heterodimer of a B chain and an A chain linked by two disulfide bonds.

Its subcellular location is the secreted. Brain peptide responsible for activation of prothoracic glands to produce ecdysone in insects. The sequence is that of Bombyxin A-2 (BBXA2) from Bombyx mori (Silk moth).